The chain runs to 823 residues: Spindle pole body component SPC97 (823 aa).

This sequence belongs to the TUBGCP family. In terms of assembly, interacts with TUB4, SPC72 and SPC98.

It is found in the nucleus. The protein resides in the cytoplasm. It localises to the cytoskeleton. The protein localises to the microtubule organizing center. Its subcellular location is the spindle pole body. Involved in microtubule organization by the microtubule organizing center, the spindle pole body (SPB). Probably part of the microtubule attachment site at the SPB. This Saccharomyces cerevisiae (strain ATCC 204508 / S288c) (Baker's yeast) protein is Spindle pole body component SPC97 (SPC97).